A 327-amino-acid chain; its full sequence is Ribose-phosphate pyrophosphokinase (327 aa).

ATP-binding positions include 40 to 42 (DGE) and 99 to 100 (RQ). 2 residues coordinate Mg(2+): His-134 and Asp-173. Lys-196 is a catalytic residue. Residues Arg-198, Asp-222, and 226-230 (DTANT) each bind D-ribose 5-phosphate.

The protein belongs to the ribose-phosphate pyrophosphokinase family. Class I subfamily. Homohexamer. Requires Mg(2+) as cofactor.

It is found in the cytoplasm. The catalysed reaction is D-ribose 5-phosphate + ATP = 5-phospho-alpha-D-ribose 1-diphosphate + AMP + H(+). It participates in metabolic intermediate biosynthesis; 5-phospho-alpha-D-ribose 1-diphosphate biosynthesis; 5-phospho-alpha-D-ribose 1-diphosphate from D-ribose 5-phosphate (route I): step 1/1. In terms of biological role, involved in the biosynthesis of the central metabolite phospho-alpha-D-ribosyl-1-pyrophosphate (PRPP) via the transfer of pyrophosphoryl group from ATP to 1-hydroxyl of ribose-5-phosphate (Rib-5-P). The sequence is that of Ribose-phosphate pyrophosphokinase from Chromobacterium violaceum (strain ATCC 12472 / DSM 30191 / JCM 1249 / CCUG 213 / NBRC 12614 / NCIMB 9131 / NCTC 9757 / MK).